Reading from the N-terminus, the 319-residue chain is MIGMIITATISVALIMVLLVLAGTFTWVERRLLGFVQERYGPNRVGPFGSLQWVADTVKILTKEDRPPPGADKLLYILAPAVAATPVLAGFGVVAIGDGWALSSVDVGLLFLLGMLGLTAYAAVLGAWASNNRFSLLGGMRAAAQMLAYEVFLGLSLMGVVMIAGSFSMAEIVEAQRGVWFVVLQPLGMALFTIAGIAAAHRLPFDLPESENDLIAGFITEYTGMSFGLFFLGEYLAVLLVSALAVTLFFGGWLGPWLPGPVWFGLKTAVIAVAFVWIRATLPRPRYDQLLSFAWKVALPLSLLNLMLTGIVVVARSAS.

Helical transmembrane passes span 1–21 (MIGM…LLVL), 77–97 (ILAP…VAIG), 107–127 (VGLL…VLGA), 147–167 (LAYE…AGSF), 179–199 (VWFV…GIAA), 214–234 (LIAG…FLGE), 238–258 (VLLV…GPWL), 262–282 (VWFG…RATL), and 293–313 (FAWK…GIVV).

It belongs to the complex I subunit 1 family. NDH-1 is composed of 14 different subunits. Subunits NuoA, H, J, K, L, M, N constitute the membrane sector of the complex.

The protein localises to the cell inner membrane. It catalyses the reaction a quinone + NADH + 5 H(+)(in) = a quinol + NAD(+) + 4 H(+)(out). Its function is as follows. NDH-1 shuttles electrons from NADH, via FMN and iron-sulfur (Fe-S) centers, to quinones in the respiratory chain. The immediate electron acceptor for the enzyme in this species is believed to be ubiquinone. Couples the redox reaction to proton translocation (for every two electrons transferred, four hydrogen ions are translocated across the cytoplasmic membrane), and thus conserves the redox energy in a proton gradient. This subunit may bind ubiquinone. The chain is NADH-quinone oxidoreductase subunit H 2 from Rhodopseudomonas palustris (strain ATCC BAA-98 / CGA009).